The following is a 684-amino-acid chain: Signal peptide peptidase-like 2C (684 aa).

A signal peptide spans 1–21; it reads MACLGFLLPVGFLLLISTVAG. The Lumenal portion of the chain corresponds to 22 to 186; it reads GKYGVAHVVS…APPEPIIDYN (165 aa). The 81-residue stretch at 83 to 163 folds into the PA domain; the sequence is SPSQRPLRQT…HYADMLDILS (81 aa). N100 is a glycosylation site (N-linked (GlcNAc...) asparagine). A helical membrane pass occupies residues 187-207; the sequence is MLVIFILAVGTVAAGGYWAGL. At 208 to 253 the chain is on the cytoplasmic side; that stretch reads TEANRLQRRRARRGGGSGGHHQLQEAAAAEGAQKEDNEDIPVDFTP. Residues 216–242 are disordered; sequence RRARRGGGSGGHHQLQEAAAAEGAQKE. Residues 227 to 238 show a composition bias toward low complexity; it reads HHQLQEAAAAEG. A helical membrane pass occupies residues 254 to 274; the sequence is AMTGVVVTLSCSLMLLLYFFY. Over 275-276 the chain is Lumenal; the sequence is DH. A helical membrane pass occupies residues 277 to 297; that stretch reads FVYVTIGIFGLGAGIGLYSCL. The Cytoplasmic segment spans residues 298 to 319; sequence SPLVCRLSLRQYQRPPHSLWAS. Residues 320 to 340 form a helical membrane-spanning segment; it reads LPLPLLLLASLCATVIIFWVA. Residues 341 to 346 are Lumenal-facing; it reads YRNEDR. A helical transmembrane segment spans residues 347–365; it reads WAWLLQDTLGISYCLFVLH. Residues 366–376 lie on the Cytoplasmic side of the membrane; sequence RVRLPTLKNCS. The chain crosses the membrane as a helical span at residues 377 to 397; the sequence is SFLLALLAFDVFFVFVTPFFT. D386 is an active-site residue. Over 398-439 the chain is Lumenal; that stretch reads KTGESIMAQVALGPAESSSHERLPMVLKVPRLRVSALTLCSQ. A helical membrane pass occupies residues 440–460; it reads PFSILGFGDIVVPGFLVAYCC. The active site involves D448. The Cytoplasmic segment spans residues 461–472; it reads RFDVQVCSRQIY. The helical transmembrane segment at 473-493 threads the bilayer; the sequence is FVACTVAYAVGLLVTFMAMVL. Residues 494–495 are Lumenal-facing; that stretch reads MQ. Residues 496-516 traverse the membrane as a helical segment; that stretch reads MGQPALLYLVSSTLLTSLAVA. A PAL motif is present at residues 499-501; that stretch reads PAL. Residues 517 to 684 lie on the Cytoplasmic side of the membrane; sequence ACRQELSLFW…RKSMSTQAPL (168 aa). Positions 548 to 614 are disordered; it reads KQEGAADAHT…SDAHLDPNEL (67 aa). A compositionally biased stretch (polar residues) spans 582-592; it reads EIVTISENEAT. Residues 594–611 show a composition bias toward basic and acidic residues; sequence PEDRSDSSEGWSDAHLDP.

It belongs to the peptidase A22B family. In terms of assembly, interacts (via active sites) with FREY; the interaction stabilizes FREY1 protein and inhibits SPPL2C proteolytic activity. In terms of processing, glycosylated. In terms of tissue distribution, highly expressed in testis where it is primarily localised in spermatids (at protein level).

It is found in the endoplasmic reticulum membrane. Functionally, sperm-specific intramembrane-cleaving aspartic protease (I-CLiP) that cleaves distinct tail-anchored proteins and SNARE proteins. In elongated spermatids, modulates intracellular Ca(2+) homeostasis by controlling PLN abundance through proteolytic cleavage. During spermatogenesis, processes SNARE proteins and impacts vesicular trafficking which supports compartmental reorganization in maturating spermatids and may play a role in formation of the acrosome. In terms of biological role, in round spermatids, acts as a scaffold protein supporting FREY1 in IZUMO1 recruitment at the endoplasmic reticulum membrane and coordination of IZUMO1 complex assembly. Stabilizes FREY1 at the endoplasmic reticulum membrane through interaction. May recruit IZUMO1 interaction partners. The chain is Signal peptide peptidase-like 2C from Homo sapiens (Human).